The sequence spans 324 residues: MKPSVILYKALPDDLLQRLQEHFTVHQVANLSPQTVDQNAAIFAEAEGLLGSNENVDAALLEKMPRLRATSTISVGYDNFDVDALTARKILLMHTPTVLTETVADTLMALVLSTARRVVEVAERVKAGEWTASIGPDWYGTDVYHKTLGIVGMGRIGMALAQRAHFGFNMPILYNARRHHKEAEERFNARYCDLDTLLQESDFVCLILPLTDETYHLFGAEQFAKMKSSAIFINAGRGPVVDENALIAALQKGEIHAAGLDVFEQEPLSVDSPLLSMANVVAVPHIGSATHETRYGMAACAVDNLIDALQGKVEKNCVNPHVAD.

Catalysis depends on residues arginine 237 and glutamate 266. Histidine 285 serves as the catalytic Proton donor.

The protein belongs to the D-isomer specific 2-hydroxyacid dehydrogenase family. GhrB subfamily. As to quaternary structure, homodimer.

It is found in the cytoplasm. The enzyme catalyses glycolate + NADP(+) = glyoxylate + NADPH + H(+). It catalyses the reaction (R)-glycerate + NAD(+) = 3-hydroxypyruvate + NADH + H(+). It carries out the reaction (R)-glycerate + NADP(+) = 3-hydroxypyruvate + NADPH + H(+). In terms of biological role, catalyzes the NADPH-dependent reduction of glyoxylate and hydroxypyruvate into glycolate and glycerate, respectively. The chain is Glyoxylate/hydroxypyruvate reductase B from Shigella dysenteriae serotype 1 (strain Sd197).